Here is a 595-residue protein sequence, read N- to C-terminus: uncharacterized protein (595 aa).

The next 9 helical transmembrane spans lie at 64–84, 86–106, 239–259, 281–301, 334–354, 368–388, 504–524, 547–567, and 571–591; these read VVFLTSIILGLIIFIIFLIVF, IFYAIFGLIGGIFIVILIGVL, FYVIACGMIPLFVVMTVPVAS, FYLWVPIASIIFMGLVYGILP, VHFITLFFWMLSIISFMLFFI, MFGILFLILPFILTSYWHFII, FIYVVVIYLSFFLYIGTSYIM, YLFQGILIYSIFSGASLGILT, and IIAGIKHILLMLIVGYMLFKF.

The protein to M.jannaschii FlaJ.

Its subcellular location is the cell membrane. This is an uncharacterized protein from Methanocaldococcus jannaschii (strain ATCC 43067 / DSM 2661 / JAL-1 / JCM 10045 / NBRC 100440) (Methanococcus jannaschii).